A 209-amino-acid chain; its full sequence is Uracil phosphoribosyltransferase (209 aa).

Residues arginine 79, arginine 104, and 131 to 139 (DPMLATGGS) contribute to the 5-phospho-alpha-D-ribose 1-diphosphate site. Uracil is bound by residues isoleucine 194 and 199–201 (GDA). Aspartate 200 is a 5-phospho-alpha-D-ribose 1-diphosphate binding site.

It belongs to the UPRTase family. It depends on Mg(2+) as a cofactor.

The catalysed reaction is UMP + diphosphate = 5-phospho-alpha-D-ribose 1-diphosphate + uracil. The protein operates within pyrimidine metabolism; UMP biosynthesis via salvage pathway; UMP from uracil: step 1/1. Allosterically activated by GTP. In terms of biological role, catalyzes the conversion of uracil and 5-phospho-alpha-D-ribose 1-diphosphate (PRPP) to UMP and diphosphate. This is Uracil phosphoribosyltransferase from Streptococcus equi subsp. zooepidemicus (strain MGCS10565).